The primary structure comprises 120 residues: Phosphoribosyl-AMP cyclohydrolase (120 aa).

Aspartate 75 is a Mg(2+) binding site. Cysteine 76 contributes to the Zn(2+) binding site. Mg(2+)-binding residues include aspartate 77 and aspartate 79. 2 residues coordinate Zn(2+): cysteine 92 and cysteine 99.

The protein belongs to the PRA-CH family. In terms of assembly, homodimer. The cofactor is Mg(2+). It depends on Zn(2+) as a cofactor.

It is found in the cytoplasm. The enzyme catalyses 1-(5-phospho-beta-D-ribosyl)-5'-AMP + H2O = 1-(5-phospho-beta-D-ribosyl)-5-[(5-phospho-beta-D-ribosylamino)methylideneamino]imidazole-4-carboxamide. It functions in the pathway amino-acid biosynthesis; L-histidine biosynthesis; L-histidine from 5-phospho-alpha-D-ribose 1-diphosphate: step 3/9. Functionally, catalyzes the hydrolysis of the adenine ring of phosphoribosyl-AMP. The protein is Phosphoribosyl-AMP cyclohydrolase of Methanosarcina acetivorans (strain ATCC 35395 / DSM 2834 / JCM 12185 / C2A).